A 119-amino-acid chain; its full sequence is Acidic phospholipase A2 DE-II (119 aa).

Cystine bridges form between Cys-11–Cys-72, Cys-26–Cys-118, Cys-28–Cys-44, Cys-43–Cys-99, Cys-50–Cys-92, Cys-60–Cys-85, and Cys-79–Cys-90. Ca(2+) is bound by residues Tyr-27, Gly-29, and Gly-31. His-47 is a catalytic residue. Asp-48 is a Ca(2+) binding site. Asp-93 is a catalytic residue.

Belongs to the phospholipase A2 family. Group I subfamily. D49 sub-subfamily. It depends on Ca(2+) as a cofactor. In terms of tissue distribution, expressed by the venom gland.

Its subcellular location is the secreted. It carries out the reaction a 1,2-diacyl-sn-glycero-3-phosphocholine + H2O = a 1-acyl-sn-glycero-3-phosphocholine + a fatty acid + H(+). PLA2 catalyzes the calcium-dependent hydrolysis of the 2-acyl groups in 3-sn-phosphoglycerides. This is Acidic phospholipase A2 DE-II from Naja melanoleuca (Forest cobra).